Here is a 228-residue protein sequence, read N- to C-terminus: HTH-type transcriptional regulator ArcR (228 aa).

22-141 (SYINIPVGVL…VKLFSLLSET (120 aa)) is a binding site for a nucleoside 3',5'-cyclic phosphate. Positions 155–228 (KLAKERVTKI…SKNWLVSKDL (74 aa)) constitute an HTH crp-type domain. Positions 188-207 (IQLLSDMAGISRETTSHIIN) form a DNA-binding region, H-T-H motif.

The protein localises to the cytoplasm. Its function is as follows. Positively regulates the expression of the arcABDCR operon under anaerobic conditions, thus playing an essential role in arginine catabolism. May also control the expression of genes encoding proteins which are involved in anaerobic metabolism. Can bind cyclic AMP. The chain is HTH-type transcriptional regulator ArcR (arcR) from Staphylococcus epidermidis (strain ATCC 12228 / FDA PCI 1200).